The primary structure comprises 407 residues: Endo-1,4-beta-xylanase (407 aa).

The signal sequence occupies residues 1–28; sequence MRNVVRKPLTIGLALTLLLPMGMTATSA. The 365-residue stretch at 42–406 folds into the GH10 domain; that stretch reads ALNAPQLDQR…KPAYWAIIDH (365 aa). Glu187 (proton donor) is an active-site residue. The active-site Nucleophile is the Glu293.

The protein belongs to the glycosyl hydrolase 10 (cellulase F) family.

It localises to the secreted. The catalysed reaction is Endohydrolysis of (1-&gt;4)-beta-D-xylosidic linkages in xylans.. Its pathway is glycan degradation; xylan degradation. This Geobacillus stearothermophilus (Bacillus stearothermophilus) protein is Endo-1,4-beta-xylanase.